The primary structure comprises 862 residues: Active breakpoint cluster region-related protein (862 aa).

Positions 29 to 84 (YDAEGNEEHKNSREGSETMPYIDESPTMSPQLSARSQDSVDGVSPTPTEVLLPGGE) are disordered. Positions 34 to 44 (NEEHKNSREGS) are enriched in basic and acidic residues. Polar residues predominate over residues 54–67 (PTMSPQLSARSQDS). One can recognise a DH domain in the interval 93–286 (MRKLVLSGVL…QNFLSSINED (194 aa)). In terms of domain architecture, PH spans 303 to 462 (QLVKDGFLVE…WREAIQKLQK (160 aa)). A C2 domain is found at 488-616 (VHNVPIISHK…QSKNWHDDVI (129 aa)). In terms of domain architecture, Rho-GAP spans 650–848 (VKISVVTKRE…YYLQHPPISF (199 aa)).

It localises to the cell projection. Its subcellular location is the dendritic spine. The protein localises to the axon. It is found in the synapse. In terms of biological role, protein with a unique structure having two opposing regulatory activities toward small GTP-binding proteins. The C-terminus is a GTPase-activating protein domain which stimulates GTP hydrolysis by RAC1, RAC2 and CDC42. Accelerates the intrinsic rate of GTP hydrolysis of RAC1 or CDC42, leading to down-regulation of the active GTP-bound form. The central Dbl homology (DH) domain functions as guanine nucleotide exchange factor (GEF) that modulates the GTPases CDC42, RHOA and RAC1. Promotes the conversion of CDC42, RHOA and RAC1 from the GDP-bound to the GTP-bound form. The chain is Active breakpoint cluster region-related protein (abr) from Xenopus laevis (African clawed frog).